The chain runs to 151 residues: Deoxyuridine 5'-triphosphate nucleotidohydrolase (151 aa).

Substrate is bound by residues arginine 70 to glycine 72, asparagine 83, leucine 87 to aspartate 89, and methionine 97.

It belongs to the dUTPase family. The cofactor is Mg(2+).

The enzyme catalyses dUTP + H2O = dUMP + diphosphate + H(+). The protein operates within pyrimidine metabolism; dUMP biosynthesis; dUMP from dCTP (dUTP route): step 2/2. In terms of biological role, this enzyme is involved in nucleotide metabolism: it produces dUMP, the immediate precursor of thymidine nucleotides and it decreases the intracellular concentration of dUTP so that uracil cannot be incorporated into DNA. The chain is Deoxyuridine 5'-triphosphate nucleotidohydrolase from Pasteurella multocida (strain Pm70).